The sequence spans 103 residues: Small ribosomal subunit protein bS20 (103 aa).

Residues 1 to 20 are compositionally biased toward basic residues; it reads MATAKPKKKNPRLASGRKRV. A disordered region spans residues 1–31; sequence MATAKPKKKNPRLASGRKRVRQDTKLNAANT.

It belongs to the bacterial ribosomal protein bS20 family.

In terms of biological role, binds directly to 16S ribosomal RNA. This Polaromonas sp. (strain JS666 / ATCC BAA-500) protein is Small ribosomal subunit protein bS20.